Reading from the N-terminus, the 127-residue chain is Probable 4-amino-4-deoxy-L-arabinose-phosphoundecaprenol flippase subunit ArnF (127 aa).

The helical transmembrane segment at 1 to 21 (MMGYFWALMSVLLVSGAQLMM) threads the bilayer. Topologically, residues 22 to 48 (KWAMVSLPPVGQTDALMSAFMSVTPGA) are periplasmic. Residues 49–69 (VALVIGLFAYVFSMGCWYMAL) traverse the membrane as a helical segment. Residues 70-77 (RRIALSKA) are Cytoplasmic-facing. Residues 78 to 98 (YPLLSLSYVLVWAAAIGLPWL) traverse the membrane as a helical segment. The Periplasmic segment spans residues 99 to 101 (HEP). Residues 102–122 (FSVGKLAGVSVIFVGLLLVCL) traverse the membrane as a helical segment. At 123–127 (PDKKS) the chain is on the cytoplasmic side.

Belongs to the ArnF family. Heterodimer of ArnE and ArnF.

The protein resides in the cell inner membrane. It participates in bacterial outer membrane biogenesis; lipopolysaccharide biosynthesis. Functionally, translocates 4-amino-4-deoxy-L-arabinose-phosphoundecaprenol (alpha-L-Ara4N-phosphoundecaprenol) from the cytoplasmic to the periplasmic side of the inner membrane. The polypeptide is Probable 4-amino-4-deoxy-L-arabinose-phosphoundecaprenol flippase subunit ArnF (Enterobacter sp. (strain 638)).